We begin with the raw amino-acid sequence, 268 residues long: Purine nucleoside phosphorylase (268 aa).

Phosphate-binding positions include S36, H68, 88-90, and A120; that span reads RIH. Residue E189 participates in a purine D-ribonucleoside binding. Position 208 (S208) interacts with phosphate. N231 contributes to the a purine D-ribonucleoside binding site.

It belongs to the PNP/MTAP phosphorylase family. As to quaternary structure, homotrimer.

It catalyses the reaction a purine 2'-deoxy-D-ribonucleoside + phosphate = a purine nucleobase + 2-deoxy-alpha-D-ribose 1-phosphate. It participates in purine metabolism; purine nucleoside salvage. Functionally, the purine nucleoside phosphorylases catalyze the phosphorolytic breakdown of the N-glycosidic bond in the beta-(deoxy)ribonucleoside molecules, with the formation of the corresponding free purine bases and pentose-1-phosphate. Cleaves guanosine, inosine, 2'-deoxyguanosine and 2'-deoxyinosine. This Mycobacterium bovis (strain ATCC BAA-935 / AF2122/97) protein is Purine nucleoside phosphorylase (punA).